A 165-amino-acid polypeptide reads, in one-letter code: Shikimate kinase (165 aa).

Residue 12 to 17 coordinates ATP; that stretch reads GCGKST. Serine 16 contacts Mg(2+). Residues aspartate 34, arginine 57, and glycine 79 each coordinate substrate. An ATP-binding site is contributed by arginine 116. Position 133 (arginine 133) interacts with substrate.

This sequence belongs to the shikimate kinase family. Monomer. Requires Mg(2+) as cofactor.

Its subcellular location is the cytoplasm. The enzyme catalyses shikimate + ATP = 3-phosphoshikimate + ADP + H(+). Its pathway is metabolic intermediate biosynthesis; chorismate biosynthesis; chorismate from D-erythrose 4-phosphate and phosphoenolpyruvate: step 5/7. In terms of biological role, catalyzes the specific phosphorylation of the 3-hydroxyl group of shikimic acid using ATP as a cosubstrate. The sequence is that of Shikimate kinase from Clostridium botulinum (strain Eklund 17B / Type B).